The chain runs to 501 residues: METFRTLLAKAALGNGISSTAYDTAWVAKLGQLDDELSDLALNWLCERQLPDGSWGAEFPFCYEDRLLSTLAAMISLTSNKHRRRRAAQVEKGLLALKNLTSGAFEGPQLDIKDATVGFELIAPTLMAEAARLGLAICHEESILGELVGVREQKLRKLGGSKINKHITAAFSVELAGQDGVGMLDVDNLQETNGSVKYSPSASAYFALHVKPGDKRALAYISSIIQAGDGGAPAFYQAEIFEIVWSLWNLSRTDIDLSDPEIVRTYLPYLDHVEQHWVRGRGVGWTGNSTLEDCDTTSVAYDVLSKFGRSPDIGAVLQFEDADWFRTYFHEVGPSISTNVHVLGALKQAGYDKCHPRVRKVLEFIRSSKEPGRFCWRDKWHRSAYYTTAHLICAASNYDDALCSDAIGWILNTQRPDGSWGFFDGQATAEETAYCIQALAHWQRHSGTSLSAQISRAGGWLSQHCEPPYAPLWIAKTLYCSATVVKAAILSALRLVDESNQ.

The protein belongs to the terpene synthase family. As to quaternary structure, monomer. The cofactor is Mg(2+).

The catalysed reaction is geranylgeranyl diphosphate = tuberculosinyl diphosphate. Its activity is regulated as follows. Strongly inhibited by 15-aza-dihydrogeranylgeraniol and 5-isopropyl-N,N,N,2-tetramethyl-4-(piperidine-1-carbonyloxy)benzenaminium chloride (Amo-1618). Inhibited by GGPP concentrations higher than 50 uM. Catalyzes the formation of tuberculosinyl diphosphate from geranylgeranyl diphosphate (GGPP). It could also react with (14R/S)-14,15-oxidoGGPP to generate 3alpha- and 3beta-hydroxytuberculosinyl diphosphate. In Mycobacterium tuberculosis (strain ATCC 25618 / H37Rv), this protein is Type B diterpene cyclase.